The chain runs to 209 residues: Large ribosomal subunit protein uL3 (209 aa).

Residues 144–165 (GSMGAASDPSRTFKNKKMPGHM) are disordered.

The protein belongs to the universal ribosomal protein uL3 family. As to quaternary structure, part of the 50S ribosomal subunit. Forms a cluster with proteins L14 and L19.

One of the primary rRNA binding proteins, it binds directly near the 3'-end of the 23S rRNA, where it nucleates assembly of the 50S subunit. This Clostridium novyi (strain NT) protein is Large ribosomal subunit protein uL3.